A 943-amino-acid chain; its full sequence is Glycine dehydrogenase (decarboxylating) (943 aa).

K695 carries the N6-(pyridoxal phosphate)lysine modification.

It belongs to the GcvP family. In terms of assembly, the glycine cleavage system is composed of four proteins: P, T, L and H. The cofactor is pyridoxal 5'-phosphate.

It catalyses the reaction N(6)-[(R)-lipoyl]-L-lysyl-[glycine-cleavage complex H protein] + glycine + H(+) = N(6)-[(R)-S(8)-aminomethyldihydrolipoyl]-L-lysyl-[glycine-cleavage complex H protein] + CO2. The glycine cleavage system catalyzes the degradation of glycine. The P protein binds the alpha-amino group of glycine through its pyridoxal phosphate cofactor; CO(2) is released and the remaining methylamine moiety is then transferred to the lipoamide cofactor of the H protein. This chain is Glycine dehydrogenase (decarboxylating), found in Jannaschia sp. (strain CCS1).